A 173-amino-acid polypeptide reads, in one-letter code: Small ribosomal subunit protein uS5 (173 aa).

The S5 DRBM domain maps to 17-80; the sequence is WQERVIQIRR…SDAKKHVVDV (64 aa).

Belongs to the universal ribosomal protein uS5 family. In terms of assembly, part of the 30S ribosomal subunit. Contacts proteins S4 and S8.

With S4 and S12 plays an important role in translational accuracy. Its function is as follows. Located at the back of the 30S subunit body where it stabilizes the conformation of the head with respect to the body. The sequence is that of Small ribosomal subunit protein uS5 from Picosynechococcus sp. (strain ATCC 27264 / PCC 7002 / PR-6) (Agmenellum quadruplicatum).